A 261-amino-acid chain; its full sequence is Pyridoxine 5'-phosphate synthase (261 aa).

3-amino-2-oxopropyl phosphate is bound at residue N6. D8–H9 is a binding site for 1-deoxy-D-xylulose 5-phosphate. A 3-amino-2-oxopropyl phosphate-binding site is contributed by R17. H42 acts as the Proton acceptor in catalysis. R44 and H49 together coordinate 1-deoxy-D-xylulose 5-phosphate. The Proton acceptor role is filled by E69. 1-deoxy-D-xylulose 5-phosphate is bound at residue T99. Catalysis depends on H213, which acts as the Proton donor. Residues G214 and G235–Q236 each bind 3-amino-2-oxopropyl phosphate.

Belongs to the PNP synthase family. In terms of assembly, homooctamer; tetramer of dimers.

The protein localises to the cytoplasm. It catalyses the reaction 3-amino-2-oxopropyl phosphate + 1-deoxy-D-xylulose 5-phosphate = pyridoxine 5'-phosphate + phosphate + 2 H2O + H(+). The protein operates within cofactor biosynthesis; pyridoxine 5'-phosphate biosynthesis; pyridoxine 5'-phosphate from D-erythrose 4-phosphate: step 5/5. Its function is as follows. Catalyzes the complicated ring closure reaction between the two acyclic compounds 1-deoxy-D-xylulose-5-phosphate (DXP) and 3-amino-2-oxopropyl phosphate (1-amino-acetone-3-phosphate or AAP) to form pyridoxine 5'-phosphate (PNP) and inorganic phosphate. The chain is Pyridoxine 5'-phosphate synthase from Aliarcobacter butzleri (strain RM4018) (Arcobacter butzleri).